The sequence spans 220 residues: Ribonuclease P protein subunit p29 (220 aa).

Ser10 carries the phosphoserine modification.

The protein belongs to the eukaryotic/archaeal RNase P protein component 1 family. As to quaternary structure, component of nuclear RNase P and RNase MRP ribonucleoproteins. RNase P consists of a catalytic RNA moiety and 10 different protein chains; POP1, POP4, POP5, POP7, RPP14, RPP21, RPP25, RPP30, RPP38 and RPP40. Within the RNase P complex, POP1, POP7 and RPP25 form the 'finger' subcomplex, POP5, RPP14, RPP40 and homodimeric RPP30 form the 'palm' subcomplex, and RPP21, POP4 and RPP38 form the 'wrist' subcomplex. All subunits of the RNase P complex interact with the catalytic RNA. Several subunits of RNase P are also part of the RNase MRP complex. RNase MRP consists of a catalytic RNA moiety and about 8 protein subunits; POP1, POP7, RPP25, RPP30, RPP38, RPP40 and possibly also POP4 and POP5.

The protein resides in the nucleus. Its subcellular location is the nucleolus. Its function is as follows. Component of ribonuclease P, a ribonucleoprotein complex that generates mature tRNA molecules by cleaving their 5'-ends. The protein is Ribonuclease P protein subunit p29 (POP4) of Homo sapiens (Human).